We begin with the raw amino-acid sequence, 260 residues long: Snake venom serine proteinase 12 (260 aa).

Residues 1–18 form the signal peptide; the sequence is MVLIRVLANLLILQLSYA. The propeptide occupies 19 to 24; that stretch reads QKSSEL. The Peptidase S1 domain maps to 25–251; sequence VIGGDECNIN…HLDWIQSIIA (227 aa). Cystine bridges form between C31/C163, C50/C66, C98/C258, C142/C212, C174/C191, and C202/C227. Catalysis depends on H65, which acts as the Charge relay system. N-linked (GlcNAc...) asparagine glycosylation is present at N103. Residue D110 is the Charge relay system of the active site. S206 functions as the Charge relay system in the catalytic mechanism.

This sequence belongs to the peptidase S1 family. Snake venom subfamily. As to quaternary structure, monomer. As to expression, expressed by the venom gland.

The protein localises to the secreted. Functionally, snake venom serine protease that may act in the hemostasis system of the prey. The chain is Snake venom serine proteinase 12 from Crotalus adamanteus (Eastern diamondback rattlesnake).